A 461-amino-acid chain; its full sequence is MCWLLLWGILHTCPTQASVLLAQQFPQQLTSPGYPEPYIKGQESHADIEAPEGFAVRLIFQDFDLEPSPGCEGDSVTISTRGTDATRLCGQQGSSLGSPPNQMEFVSSGRSLRLTFRAHSSKNKVTHLHKGFLALYQAAVSQPNGDAEAFTTPGANPPEIQNHCPGPYYKEEQTGTLSCPSSRKWKDRQRGEEVPECVPVCGRPVVPIAENPNTFGSSRAKPGNFPWQAFTSIYGRGGGALLGDRWILTAAHTIFPKDSIYLRKNKTVNVFLGHTDVDELLKLGNHPVRRVVVHPDYRQEESHNFDGDIALLELEHRVPLGPSLLPVCLPDNETLYHSGLWGYISGFGVEMGWLTTKLKYSKLPVAPREACEAWLRQRQRTEVFSDNMFCVGEEMQVNSVCQGDSGSVYVVWDDRALRWVATGIVSWGVGCGKGYGFYTKVLSYVDWIKGVIECKDRCPEA.

The N-terminal stretch at 1 to 22 is a signal peptide; it reads MCWLLLWGILHTCPTQASVLLA. The 117-residue stretch at 23-139 folds into the CUB domain; that stretch reads QQFPQQLTSP…KGFLALYQAA (117 aa). Cystine bridges form between C71–C89 and C164–C197. Residues 138–199 form the Sushi domain; the sequence is AAVSQPNGDA…RGEEVPECVP (62 aa). The 240-residue stretch at 214–453 folds into the Peptidase S1 domain; that stretch reads TFGSSRAKPG…YVDWIKGVIE (240 aa). Residue H252 is the Charge relay system of the active site. The N-linked (GlcNAc...) asparagine glycan is linked to N265. The active-site Charge relay system is the D308. N332 is a glycosylation site (N-linked (GlcNAc...) asparagine). Disulfide bonds link C371–C390 and C401–C431. Catalysis depends on S405, which acts as the Charge relay system.

The protein belongs to the peptidase S1 family.

It localises to the secreted. Functionally, mediates the proteolytic cleavage of HP/haptoglobin in the endoplasmic reticulum. The chain is Complement C1r subcomponent-like protein (C1rl) from Rattus norvegicus (Rat).